Consider the following 215-residue polypeptide: Chloramphenicol acetyltransferase (215 aa).

H189 acts as the Proton acceptor in catalysis.

Belongs to the chloramphenicol acetyltransferase family. As to quaternary structure, homotrimer.

The enzyme catalyses chloramphenicol + acetyl-CoA = chloramphenicol 3-acetate + CoA. In terms of biological role, this enzyme is an effector of chloramphenicol resistance in bacteria. The chain is Chloramphenicol acetyltransferase (cat) from Staphylococcus intermedius.